The primary structure comprises 540 residues: Probable metabolite transport protein YFL040W (540 aa).

The Cytoplasmic segment spans residues 1 to 29; it reads MTAMKAIVWRLPKMPKIKITKTYEVTKIT. A helical membrane pass occupies residues 30–50; it reads AILTLVGFIMGLEVPSLATFL. The Extracellular segment spans residues 51–67; the sequence is TNKTFNEYFKYPTPLQQ. An N-linked (GlcNAc...) asparagine glycan is attached at Asn-52. The helical transmembrane segment at 68–88 threads the bilayer; that stretch reads GLLMGSTPLGGIMGCFICCIM. Residues 89–101 lie on the Cytoplasmic side of the membrane; it reads NDRFSRIYQFQSG. The helical transmembrane segment at 102–122 threads the bilayer; it reads IIIWNIVTLLNFCIWDILGLL. Residues 123-126 lie on the Extracellular side of the membrane; sequence ICRM. Residues 127 to 147 form a helical membrane-spanning segment; that stretch reads IKGMILGNFSILVASYANEVI. Over 148–158 the chain is Cytoplasmic; sequence PRGKRGSTMSY. A helical transmembrane segment spans residues 159 to 179; that stretch reads IQLCLTIGILVMHYLCIALSL. At 180-187 the chain is on the extracellular side; that stretch reads WDSHFAFR. A helical membrane pass occupies residues 188–208; sequence IAWCIGIIPGLLFWMASYALP. The Cytoplasmic portion of the chain corresponds to 209-275; it reads ESYHWLVLHG…KKLPRGSFKP (67 aa). A helical membrane pass occupies residues 276–296; that stretch reads LILGMTLQLLVQFSGINIILG. Residues 297-313 lie on the Extracellular side of the membrane; sequence YITYICEIVGLEGNVKL. Residues 314 to 334 form a helical membrane-spanning segment; that stretch reads FTSSIPYFINMVLSLLPITFI. Residues 335 to 341 lie on the Cytoplasmic side of the membrane; the sequence is DYTSRKL. A helical membrane pass occupies residues 342-362; the sequence is ITLLGGFPISGLLITIGALFV. Residues 363 to 385 are Extracellular-facing; the sequence is KYGQDTKPIDGNRSLVWSIGENP. Asn-374 carries N-linked (GlcNAc...) asparagine glycosylation. The helical transmembrane segment at 386–406 threads the bilayer; sequence FVGGWILTLCFLIVGIFAMSL. The Cytoplasmic segment spans residues 407–428; sequence SSIPWVYTNEMLPSRVKVKGFA. The helical transmembrane segment at 429-449 threads the bilayer; the sequence is ICVTFGWLGNFILTFLCPVMI. Over 450–455 the chain is Extracellular; the sequence is ERLKGT. Residues 456–476 form a helical membrane-spanning segment; the sequence is TFIIFGSLTFLISLSVLIWFP. The Cytoplasmic portion of the chain corresponds to 477-540; sequence ETKGMSIEDI…KLKSDEEMII (64 aa). The tract at residues 499–540 is disordered; that stretch reads NLHGEKGIKTPDSNSNGGSTRSSQEGQLHKPIKLKSDEEMII. Polar residues predominate over residues 509 to 524; it reads PDSNSNGGSTRSSQEG.

It belongs to the major facilitator superfamily. Sugar transporter (TC 2.A.1.1) family.

Its subcellular location is the membrane. The protein is Probable metabolite transport protein YFL040W of Saccharomyces cerevisiae (strain ATCC 204508 / S288c) (Baker's yeast).